A 139-amino-acid polypeptide reads, in one-letter code: Actin-depolymerizing factor 6 (139 aa).

One can recognise an ADF-H domain in the interval 5–139 (ASGMAVGDEC…SMDIVKARAL (135 aa)).

Belongs to the actin-binding proteins ADF family.

Actin-depolymerizing protein. Severs actin filaments (F-actin) and binds to actin monomers. The sequence is that of Actin-depolymerizing factor 6 (ADF6) from Oryza sativa subsp. japonica (Rice).